Consider the following 276-residue polypeptide: MGQKVHPYSLRIKINRDWKSKWYFDKKLYSEILHEDFLIRRETMKFLKGIKFDISDIEIIRNNLQRVTVVISTPRPGSVIGVKGANLEKIGQLLTRKVSKKINIKIKEIKKPEFDAQIVANGIAKQLENRASYRKLLKSSLLSSISKGIQGIKIKVSGRLGGAEIARSFEVKEGRIPLHTLRANIDYGFAEAYTTYGVIGVKVWLFKGEILGKQINSDAGQVINRKPSKDKVERFDKGKIDDKGRKVVNDDKFSREKLEIGSRSKNDFKNKNDSDI.

In terms of domain architecture, KH type-2 spans 39–110 (IRRETMKFLK…KINIKIKEIK (72 aa)).

This sequence belongs to the universal ribosomal protein uS3 family. As to quaternary structure, part of the 30S ribosomal subunit. Forms a tight complex with proteins S10 and S14.

In terms of biological role, binds the lower part of the 30S subunit head. Binds mRNA in the 70S ribosome, positioning it for translation. This chain is Small ribosomal subunit protein uS3, found in Borrelia recurrentis (strain A1).